The chain runs to 105 residues: Ferredoxin-2 (105 aa).

The 2Fe-2S ferredoxin-type domain occupies 4–94 (YQVEVIYQGQ…DLKIETHKED (91 aa)). The [2Fe-2S] cluster site is built by Cys40, Cys45, Cys48, and Cys78.

Belongs to the 2Fe2S plant-type ferredoxin family. As to quaternary structure, forms a complex with heterodimeric ferredoxin-thioredoxin reductase (FTR) and thioredoxin. [2Fe-2S] cluster serves as cofactor.

Ferredoxins are iron-sulfur proteins that transfer electrons in a wide variety of metabolic reactions. The protein is Ferredoxin-2 (petF2) of Synechococcus sp. (strain ATCC 27144 / PCC 6301 / SAUG 1402/1) (Anacystis nidulans).